The following is a 555-amino-acid chain: MTTSSPPQAVTTLTESIKNLLESNFCHVVVKGELSNVSLQPSGHLYFGIKDSRSFLNGAFFHFKSKYFDRRPKDGDSVIIHGKLTVYAPRGQYQIVAHALVYAGEGDLLQKFEETKKRLAAEGYFALEKKQTLPNIPQSIGVITSPTGAVIQDILRVLSRRCYQYKILIYPVTVQGATAAKEISRAIEEMNKENLADVLILARGGGSIEDLWAFNEEIVVKAIDASSIPIISAIGHETDYTLCDFAADVRAPTPSAAAEIVCQSSEQQIQVFKSYLRYLNAHSQQLLSGKIKQIQQWKRYLDHVDFFRSAHQSLDYLCLSVERSIQTKLSQYKQRYMQYARWLQSDVLQRMTYRLHDLWKMIVQAFHNRLTAAKHLCMQKKKNLTFHNTQQFIQKLDLWKQQLHRALTQRLGYCSQSLTHQQTLLKHFTIKLNQQFTKGKHTLNLLQKRLTRTFANTVDEHRENYVRSRENLIFSLHHLVERNREKYYTLSKQLTLLNPKNVFKRGYAMLFDFNENFAIISAKSLHKHSCVRVRLQDGEATLTVTDIQNFETQES.

It belongs to the XseA family. Heterooligomer composed of large and small subunits.

Its subcellular location is the cytoplasm. The catalysed reaction is Exonucleolytic cleavage in either 5'- to 3'- or 3'- to 5'-direction to yield nucleoside 5'-phosphates.. In terms of biological role, bidirectionally degrades single-stranded DNA into large acid-insoluble oligonucleotides, which are then degraded further into small acid-soluble oligonucleotides. The chain is Exodeoxyribonuclease 7 large subunit from Chlamydia felis (strain Fe/C-56) (Chlamydophila felis).